We begin with the raw amino-acid sequence, 160 residues long: Phosphopantetheine adenylyltransferase (160 aa).

Thr9 serves as a coordination point for substrate. Residues 9 to 10 (TF) and His17 contribute to the ATP site. Residues Lys41, Leu73, and Arg87 each contribute to the substrate site. Residues 88-90 (GLR), Glu98, and 123-129 (YSFISST) each bind ATP.

Belongs to the bacterial CoaD family. Homohexamer. Mg(2+) serves as cofactor.

The protein localises to the cytoplasm. The enzyme catalyses (R)-4'-phosphopantetheine + ATP + H(+) = 3'-dephospho-CoA + diphosphate. It participates in cofactor biosynthesis; coenzyme A biosynthesis; CoA from (R)-pantothenate: step 4/5. In terms of biological role, reversibly transfers an adenylyl group from ATP to 4'-phosphopantetheine, yielding dephospho-CoA (dPCoA) and pyrophosphate. This Ectopseudomonas mendocina (strain ymp) (Pseudomonas mendocina) protein is Phosphopantetheine adenylyltransferase.